The following is a 356-amino-acid chain: uncharacterized protein (356 aa).

This sequence belongs to the NAD(P)-dependent epimerase/dehydratase family. Requires NAD(+) as cofactor. NADP(+) is required as a cofactor.

In terms of biological role, putative nucleotide sugar epimerase/dehydrogenase. This is an uncharacterized protein from Sinorhizobium fredii (strain NBRC 101917 / NGR234).